A 290-amino-acid chain; its full sequence is Glycine--tRNA ligase alpha subunit (290 aa).

The protein belongs to the class-II aminoacyl-tRNA synthetase family. In terms of assembly, tetramer of two alpha and two beta subunits.

It localises to the cytoplasm. It catalyses the reaction tRNA(Gly) + glycine + ATP = glycyl-tRNA(Gly) + AMP + diphosphate. This is Glycine--tRNA ligase alpha subunit from Fusobacterium nucleatum subsp. nucleatum (strain ATCC 25586 / DSM 15643 / BCRC 10681 / CIP 101130 / JCM 8532 / KCTC 2640 / LMG 13131 / VPI 4355).